Reading from the N-terminus, the 141-residue chain is Large ribosomal subunit protein uL11B/uL11C (141 aa).

It belongs to the universal ribosomal protein uL11 family. In terms of assembly, part of the ribosomal stalk of the 50S ribosomal subunit. Interacts with L10 and the large rRNA to form the base of the stalk. L10 forms an elongated spine to which L12 dimers bind in a sequential fashion forming a multimeric L10(L12)X complex. One or more lysine residues are methylated.

Forms part of the ribosomal stalk which helps the ribosome interact with GTP-bound translation factors. This Bacillus cereus (strain ATCC 14579 / DSM 31 / CCUG 7414 / JCM 2152 / NBRC 15305 / NCIMB 9373 / NCTC 2599 / NRRL B-3711) protein is Large ribosomal subunit protein uL11B/uL11C.